The following is a 1081-amino-acid chain: Psi-producing oxygenase A (1081 aa).

Residues 105 to 446 form a linoleate 8R-lipoxygenase region; it reads TKSFLNMLWN…DGAFNDDDLV (342 aa). His202 serves as a coordination point for heme b. Tyr374 is an active-site residue. His377 is a heme b binding site. Positions 654-1081 are 9,12-octadecadienoate 8-hydroperoxide 8R-isomerase; sequence IFISSHAACM…GELPQLKEDF (428 aa).

The protein belongs to the peroxidase family. As to quaternary structure, homotetramer. Heme b serves as cofactor.

The enzyme catalyses (9Z,12Z)-octadecadienoate + O2 = (8R,9Z,12Z)-8-hydroperoxyoctadeca-9,12-dienoate. It carries out the reaction (8R,9Z,12Z)-8-hydroperoxyoctadeca-9,12-dienoate = (5S,8R,9Z,12Z)-5,8-dihydroxyoctadeca-9,12-dienoate. Its function is as follows. Bifunctional heme-containing enzyme that oxidizes linoleic acid to (8R,9Z,12Z)-8-hydroperoxyoctadeca-9,12-dienoate (within the N-terminal heme peroxidase domain), which is subsequently isomerized to (5S,8R,9Z,12Z)-5,8-dihydroxyoctadeca-9,12-dienoate (within the C-terminal P450 heme thiolate domain). Oxidized unsaturated fatty acids, so-called oxylipins, derived from endogenous fatty acids, influence the development of the asexual conidiophores and sexual cleistothecia and regulate the secondary metabolism. These substances were collectively named psi factors and are primarily a mixture of hydroxylated oleic, linoleic and alpha-linolenic acids. They are termed psi-beta, psi-alpha, and psi-gamma, respectively. In Emericella nidulans (Aspergillus nidulans), this protein is Psi-producing oxygenase A (ppoA).